A 1709-amino-acid polypeptide reads, in one-letter code: Protein SHORTAGE IN CHIASMATA 1 homolog (1709 aa).

Basic and acidic residues-rich tracts occupy residues 532-542, 552-568, and 1601-1613; these read PKLQDEDKHSD, DPQK…EGGT, and ESFR…DTPS. Disordered stretches follow at residues 532–586 and 1566–1662; these read PKLQ…SSFP and KRKA…DPTW.

The protein belongs to the XPF family. As to quaternary structure, interacts (via C-terminus) with PTD. Interacts with ZIP4. Highly expressed in anthers and pistil during meiosis. Expressed in pollen mother cells (PMCs) during meiosis. Expressed at low levels in roots, shoots, leaves, flowers, and glumes.

The protein resides in the chromosome. It localises to the nucleus. The protein localises to the cytoplasm. Its subcellular location is the cell membrane. Its function is as follows. Essential for normal crossover (CO) formation during meiosis. Essential component for the formation of class I meiotic COs. Interacts with PTD, another meiotic component, to regulate CO formation, possibly by stabilizing the recombination intermediates during meiosis. SHOC1 and PTD may form transient heterotrimeric or heterotetrameric complexes with HEI10 and/or ZIP4 to promote class I COs formation. Does not seem to be involved in early meiotic recombination steps involving double-strand break (DSB) formation, processing, and single-strand invasion. Does not seem to be involved in homologous pairing or synaptonemal complex (SC) assembly. This Oryza sativa subsp. japonica (Rice) protein is Protein SHORTAGE IN CHIASMATA 1 homolog.